Consider the following 132-residue polypeptide: Ribosome-binding factor A (132 aa).

Belongs to the RbfA family. In terms of assembly, monomer. Binds 30S ribosomal subunits, but not 50S ribosomal subunits or 70S ribosomes.

It localises to the cytoplasm. In terms of biological role, one of several proteins that assist in the late maturation steps of the functional core of the 30S ribosomal subunit. Associates with free 30S ribosomal subunits (but not with 30S subunits that are part of 70S ribosomes or polysomes). Required for efficient processing of 16S rRNA. May interact with the 5'-terminal helix region of 16S rRNA. The chain is Ribosome-binding factor A from Bordetella avium (strain 197N).